The following is a 146-amino-acid chain: 3-dehydroquinate dehydratase (146 aa).

Tyrosine 22 functions as the Proton acceptor in the catalytic mechanism. Residues asparagine 74, histidine 80, and aspartate 87 each coordinate substrate. Histidine 100 functions as the Proton donor in the catalytic mechanism. Substrate is bound by residues leucine 101–serine 102 and arginine 111.

The protein belongs to the type-II 3-dehydroquinase family. In terms of assembly, homododecamer.

It catalyses the reaction 3-dehydroquinate = 3-dehydroshikimate + H2O. The protein operates within metabolic intermediate biosynthesis; chorismate biosynthesis; chorismate from D-erythrose 4-phosphate and phosphoenolpyruvate: step 3/7. Its function is as follows. Catalyzes a trans-dehydration via an enolate intermediate. The protein is 3-dehydroquinate dehydratase of Clostridium perfringens (strain SM101 / Type A).